Reading from the N-terminus, the 765-residue chain is AMP deaminase 3 (765 aa).

Phosphoserine is present on residues S85 and S106. The Zn(2+) site is built by H315 and H317. Substrate contacts are provided by residues H317 and 386–391 (KFNSKY). Zn(2+) is bound at residue H584. A substrate-binding site is contributed by E587. The Proton acceptor role is filled by H606. Zn(2+) is bound at residue D661. 662 to 665 (DPMQ) contributes to the substrate binding site.

The protein belongs to the metallo-dependent hydrolases superfamily. Adenosine and AMP deaminases family. In terms of assembly, homotetramer. Zn(2+) serves as cofactor. As to expression, expressed in adult tissues such as aorta, heart, kidney, lung, muscle and thyroid. Weakly expressed in thyroid and not detected in liver.

The catalysed reaction is AMP + H2O + H(+) = IMP + NH4(+). It participates in purine metabolism; IMP biosynthesis via salvage pathway; IMP from AMP: step 1/1. Functionally, AMP deaminase plays a critical role in energy metabolism. This is AMP deaminase 3 from Rattus norvegicus (Rat).